A 170-amino-acid polypeptide reads, in one-letter code: Myosin regulatory light chain 2 (170 aa).

Residues 1–13 (MSKAAKKKSSKKR) are compositionally biased toward basic residues. Positions 1–22 (MSKAAKKKSSKKRSGSEAAQFD) are disordered. 2 EF-hand domains span residues 24-59 (KTIQEFKEAFGIMDQNKDGIIDKSDLKDLYASMGQI) and 93-128 (DPEATIVGAFAMFDKKDCGKIKEDDLIKILQNKRGE). The Ca(2+) site is built by aspartate 37, asparagine 39, aspartate 41, and aspartate 48.

As to quaternary structure, myosin is a hexamer of 2 heavy chains and 4 light chains (two regulatory light chains and two essential light chains).

In Caenorhabditis elegans, this protein is Myosin regulatory light chain 2 (mlc-2).